We begin with the raw amino-acid sequence, 170 residues long: Inosine/xanthosine triphosphatase (170 aa).

Belongs to the YjjX NTPase family. As to quaternary structure, homodimer. The cofactor is Mg(2+). Mn(2+) is required as a cofactor.

It carries out the reaction XTP + H2O = XDP + phosphate + H(+). The catalysed reaction is ITP + H2O = IDP + phosphate + H(+). In terms of biological role, phosphatase that hydrolyzes non-canonical purine nucleotides such as XTP and ITP to their respective diphosphate derivatives. Probably excludes non-canonical purines from DNA/RNA precursor pool, thus preventing their incorporation into DNA/RNA and avoiding chromosomal lesions. This is Inosine/xanthosine triphosphatase from Aliivibrio fischeri (strain MJ11) (Vibrio fischeri).